Consider the following 317-residue polypeptide: R-phycoerythrin gamma chain, chloroplastic (317 aa).

A chloroplast-targeting transit peptide spans 1 to 40; it reads MASPAFAVNGMFTPVKLSGSFTASMPVDSKPAASATGVRM. Phycourobilin-binding residues include cysteine 94 and cysteine 133. Cysteine 210 serves as a coordination point for (2R,3E)-phycoerythrobilin. A phycourobilin-binding site is contributed by cysteine 297.

Heteromer of 1 alpha, 1 beta and 2 gamma chains. Contains four covalently linked bilin chromophores.

Its subcellular location is the plastid. The protein resides in the chloroplast thylakoid membrane. Functionally, critical for the incorporation of phycoerythrin in the phycobilisome complex. This chain is R-phycoerythrin gamma chain, chloroplastic, found in Aglaothamnion neglectum (Red alga).